A 280-amino-acid polypeptide reads, in one-letter code: Large ribosomal subunit protein uL2 (280 aa).

Disordered regions lie at residues 1–59 and 223–280; these read MAIR…GGHK and GVVM…NKKR. Residues 23-33 show a composition bias toward basic and acidic residues; the sequence is ELTRSTPEKSL. 2 stretches are compositionally biased toward basic residues: residues 36–59 and 269–280; these read PLHK…GGHK and VRRRRSNKNKKR.

Belongs to the universal ribosomal protein uL2 family. As to quaternary structure, part of the 50S ribosomal subunit. Forms a bridge to the 30S subunit in the 70S ribosome.

One of the primary rRNA binding proteins. Required for association of the 30S and 50S subunits to form the 70S ribosome, for tRNA binding and peptide bond formation. It has been suggested to have peptidyltransferase activity; this is somewhat controversial. Makes several contacts with the 16S rRNA in the 70S ribosome. This Corynebacterium kroppenstedtii (strain DSM 44385 / JCM 11950 / CIP 105744 / CCUG 35717) protein is Large ribosomal subunit protein uL2.